Here is a 170-residue protein sequence, read N- to C-terminus: S-ribosylhomocysteine lyase (170 aa).

Fe cation is bound by residues histidine 54, histidine 58, and cysteine 128.

This sequence belongs to the LuxS family. As to quaternary structure, homodimer. Fe cation serves as cofactor.

It carries out the reaction S-(5-deoxy-D-ribos-5-yl)-L-homocysteine = (S)-4,5-dihydroxypentane-2,3-dione + L-homocysteine. Its function is as follows. Involved in the synthesis of autoinducer 2 (AI-2) which is secreted by bacteria and is used to communicate both the cell density and the metabolic potential of the environment. The regulation of gene expression in response to changes in cell density is called quorum sensing. Catalyzes the transformation of S-ribosylhomocysteine (RHC) to homocysteine (HC) and 4,5-dihydroxy-2,3-pentadione (DPD). The chain is S-ribosylhomocysteine lyase from Marinomonas sp. (strain MWYL1).